We begin with the raw amino-acid sequence, 177 residues long: Translation initiation factor IF-3 (177 aa).

It belongs to the IF-3 family. Monomer.

The protein localises to the cytoplasm. Functionally, IF-3 binds to the 30S ribosomal subunit and shifts the equilibrium between 70S ribosomes and their 50S and 30S subunits in favor of the free subunits, thus enhancing the availability of 30S subunits on which protein synthesis initiation begins. The polypeptide is Translation initiation factor IF-3 (Synechocystis sp. (strain ATCC 27184 / PCC 6803 / Kazusa)).